Reading from the N-terminus, the 597-residue chain is Phosphoinositide phospholipase C 4 (597 aa).

In terms of domain architecture, EF-hand spans 26 to 60; sequence GPVEDVRDLFEKYTEGDAHMSPEQLQKLMTEEGGE. In terms of domain architecture, PI-PLC X-box spans 114-257; the sequence is QNMDAPLSHY…LKEKILISTK (144 aa). Active-site residues include His129 and His174. Residues 259 to 290 show a composition bias toward basic and acidic residues; the sequence is PKEYLEANDTKEKDNGEKGKDSDEDVWGKEPE. The segment at 259 to 324 is disordered; that stretch reads PKEYLEANDT…ERGSCESDTS (66 aa). Polar residues predominate over residues 293-309; it reads ISTQSDLDKVTSSVNDL. The PI-PLC Y-box domain maps to 333–449; it reads KRLIAIHAGK…GYVKKPDFLM (117 aa). Residues 449–579 form the C2 domain; sequence MDASPNGQDF…QGIRAVPLFN (131 aa).

Ca(2+) serves as cofactor. In terms of tissue distribution, low expression in leaves, roots, flowers and siliques. Expressed in pollen and in cells of the stigma surface.

The protein resides in the cytoplasm. It is found in the cytosol. Its subcellular location is the cell membrane. The catalysed reaction is a 1,2-diacyl-sn-glycero-3-phospho-(1D-myo-inositol-4,5-bisphosphate) + H2O = 1D-myo-inositol 1,4,5-trisphosphate + a 1,2-diacyl-sn-glycerol + H(+). The production of the second messenger molecules diacylglycerol (DAG) and inositol 1,4,5-trisphosphate (IP3) is mediated by activated phosphatidylinositol-specific phospholipase C enzymes. The sequence is that of Phosphoinositide phospholipase C 4 (PLC4) from Arabidopsis thaliana (Mouse-ear cress).